The chain runs to 431 residues: Serine hydroxymethyltransferase (431 aa).

Residue 122–124 coordinates (6S)-5,6,7,8-tetrahydrofolate; sequence GHI. Lysine 228 carries the N6-(pyridoxal phosphate)lysine modification. Residue glutamate 245 coordinates (6S)-5,6,7,8-tetrahydrofolate.

The protein belongs to the SHMT family. In terms of assembly, homodimer. Pyridoxal 5'-phosphate is required as a cofactor.

It localises to the cytoplasm. It functions in the pathway amino-acid biosynthesis; glycine biosynthesis; glycine from L-serine: step 1/1. Catalyzes the reversible interconversion of serine and glycine with a modified folate serving as the one-carbon carrier. Also exhibits a pteridine-independent aldolase activity toward beta-hydroxyamino acids, producing glycine and aldehydes, via a retro-aldol mechanism. This is Serine hydroxymethyltransferase from Thermococcus kodakarensis (strain ATCC BAA-918 / JCM 12380 / KOD1) (Pyrococcus kodakaraensis (strain KOD1)).